Here is a 173-residue protein sequence, read N- to C-terminus: Putative phosphoesterase GK0864 (173 aa).

His-34 acts as the Proton donor in catalysis. 2 short sequence motifs (HXTX) span residues 34 to 37 (HITL) and 115 to 118 (HITI). Residue His-115 is the Proton acceptor of the active site.

Belongs to the 2H phosphoesterase superfamily. YjcG family.

This is Putative phosphoesterase GK0864 from Geobacillus kaustophilus (strain HTA426).